Reading from the N-terminus, the 356-residue chain is Protein-arginine kinase (356 aa).

A Phosphagen kinase C-terminal domain is found at isoleucine 24–alanine 254. ATP-binding positions include serine 27 to arginine 31, histidine 92, arginine 125, arginine 176 to methionine 180, and arginine 207 to glutamate 212. Positions arginine 337–alanine 342 match the RDXXRA motif of the pArg binding pocket involved in allosteric regulation motif.

The protein belongs to the ATP:guanido phosphotransferase family.

It carries out the reaction L-arginyl-[protein] + ATP = N(omega)-phospho-L-arginyl-[protein] + ADP + H(+). Appears to be allosterically activated by the binding of pArg-containing polypeptides to the pArg-binding pocket localized in the C-terminal domain of McsB. In terms of biological role, catalyzes the specific phosphorylation of arginine residues in a large number of proteins. Is part of the bacterial stress response system. Protein arginine phosphorylation has a physiologically important role and is involved in the regulation of many critical cellular processes, such as protein homeostasis, motility, competence, and stringent and stress responses, by regulating gene expression and protein activity. The sequence is that of Protein-arginine kinase from Bacillus cytotoxicus (strain DSM 22905 / CIP 110041 / 391-98 / NVH 391-98).